Consider the following 175-residue polypeptide: Ribosome maturation factor RimM (175 aa).

Positions 98 to 175 constitute a PRC barrel domain; sequence EGEYYWYQLE…EMRVDWDADF (78 aa).

The protein belongs to the RimM family. As to quaternary structure, binds ribosomal protein uS19.

It localises to the cytoplasm. Functionally, an accessory protein needed during the final step in the assembly of 30S ribosomal subunit, possibly for assembly of the head region. Essential for efficient processing of 16S rRNA. May be needed both before and after RbfA during the maturation of 16S rRNA. It has affinity for free ribosomal 30S subunits but not for 70S ribosomes. The protein is Ribosome maturation factor RimM of Pseudomonas paraeruginosa (strain DSM 24068 / PA7) (Pseudomonas aeruginosa (strain PA7)).